A 495-amino-acid chain; its full sequence is Divinyl ether synthase CYP74M3 (495 aa).

Cysteine 446 is a binding site for heme.

Belongs to the cytochrome P450 family. Heme serves as cofactor.

The enzyme catalyses (13S)-hydroperoxy-(9Z,11E)-octadecadienoate = etheroleate + H2O. It catalyses the reaction (13S)-hydroperoxy-(9Z,11E,15Z)-octadecatrienoate = etherolenate + H2O. It functions in the pathway lipid metabolism; oxylipin biosynthesis. Divinyl ether synthase involved in oxylipin biosynthesis. Catalyzes the conversion of (13S)-hydroperoxy-(9Z,11E)-octadecadienoate (13-HPOD) to etheroleate and (13S)-hydroperoxy-(9Z,11E,15Z)-octadecatrienoate (13-HPOT) to etherolenate. Has no activity with the corresponding 9-hydroperoxides (9-HPOD and 9-HPOT). The sequence is that of Divinyl ether synthase CYP74M3 from Selaginella moellendorffii (Spikemoss).